Reading from the N-terminus, the 511-residue chain is Coatomer subunit delta (511 aa).

The segment covering 168-177 has biased composition (basic and acidic residues); that stretch reads QARRDAERQG. A disordered region spans residues 168 to 196; sequence QARRDAERQGKKAPGFGGFGSSTVSGGST. Residue Ser-223 is modified to Phosphoserine. N6-acetyllysine occurs at positions 233 and 241. Ser-244 carries the phosphoserine modification. Residues 271–511 enclose the MHD domain; sequence MESVHMKIEE…TFLVDKYEIL (241 aa). Residues Lys-309 and Lys-351 each carry the N6-acetyllysine modification. Ser-493 bears the Phosphoserine mark.

The protein belongs to the adaptor complexes medium subunit family. Delta-COP subfamily. As to quaternary structure, oligomeric complex that consists of at least the alpha, beta, beta', gamma, delta, epsilon and zeta subunits. As to expression, ubiquitously expressed.

The protein localises to the cytoplasm. The protein resides in the golgi apparatus membrane. Its subcellular location is the cytoplasmic vesicle. It localises to the COPI-coated vesicle membrane. Functionally, the coatomer is a cytosolic protein complex that binds to dilysine motifs and reversibly associates with Golgi non-clathrin-coated vesicles, which further mediate biosynthetic protein transport from the ER, via the Golgi up to the trans Golgi network. Coatomer complex is required for budding from Golgi membranes, and is essential for the retrograde Golgi-to-ER transport of dilysine-tagged proteins. In mammals, the coatomer can only be recruited by membranes associated to ADP-ribosylation factors (ARFs), which are small GTP-binding proteins; the complex also influences the Golgi structural integrity, as well as the processing, activity, and endocytic recycling of LDL receptors. This chain is Coatomer subunit delta (ARCN1), found in Bos taurus (Bovine).